Here is a 110-residue protein sequence, read N- to C-terminus: Mitochondrial pyruvate carrier 1 (110 aa).

2 helical membrane passes run 20–36 (HFWGPIANWGFVAAGLV) and 44–61 (MISGNMSSAMCVYSALFM).

The protein belongs to the mitochondrial pyruvate carrier (MPC) (TC 2.A.105) family.

It is found in the mitochondrion inner membrane. Its function is as follows. Mediates the uptake of pyruvate into mitochondria. The sequence is that of Mitochondrial pyruvate carrier 1 from Arabidopsis thaliana (Mouse-ear cress).